The primary structure comprises 150 residues: Deoxyuridine 5'-triphosphate nucleotidohydrolase (150 aa).

Substrate contacts are provided by residues 69-71 (RSG), asparagine 82, 86-88 (LID), and lysine 96.

Belongs to the dUTPase family. Mg(2+) serves as cofactor.

It catalyses the reaction dUTP + H2O = dUMP + diphosphate + H(+). The protein operates within pyrimidine metabolism; dUMP biosynthesis; dUMP from dCTP (dUTP route): step 2/2. This enzyme is involved in nucleotide metabolism: it produces dUMP, the immediate precursor of thymidine nucleotides and it decreases the intracellular concentration of dUTP so that uracil cannot be incorporated into DNA. This is Deoxyuridine 5'-triphosphate nucleotidohydrolase from Neisseria gonorrhoeae (strain NCCP11945).